Here is an 894-residue protein sequence, read N- to C-terminus: Translation initiation factor IF-2 (894 aa).

Positions 25 to 304 (ADAGMNKASS…KPTSMQHGFD (280 aa)) are disordered. Composition is skewed to basic and acidic residues over residues 33-44 (SSDHVSDEEKQK), 52-62 (EHGDKSGESEP), 101-174 (STIE…KEMN), 184-239 (AKKE…ENSD), and 247-263 (YARE…EGGA). The span at 283–293 (RGGKGRNKGKL) shows a compositional bias: basic residues. Residues 393-562 (PRAPVVTIMG…LLQSEVLELT (170 aa)) enclose the tr-type G domain. A G1 region spans residues 402 to 409 (GHVDHGKT). 402–409 (GHVDHGKT) is a binding site for GTP. A G2 region spans residues 427-431 (GITQH). Positions 448-451 (DTPG) are G3. GTP contacts are provided by residues 448 to 452 (DTPGH) and 502 to 505 (NKID). A G4 region spans residues 502 to 505 (NKID). The segment at 538 to 540 (SAK) is G5.

The protein belongs to the TRAFAC class translation factor GTPase superfamily. Classic translation factor GTPase family. IF-2 subfamily.

The protein resides in the cytoplasm. Its function is as follows. One of the essential components for the initiation of protein synthesis. Protects formylmethionyl-tRNA from spontaneous hydrolysis and promotes its binding to the 30S ribosomal subunits. Also involved in the hydrolysis of GTP during the formation of the 70S ribosomal complex. This chain is Translation initiation factor IF-2, found in Vibrio campbellii (strain ATCC BAA-1116).